Consider the following 568-residue polypeptide: Sesquiterpene synthase 14 (568 aa).

Aspartate 319, aspartate 323, aspartate 463, and glutamate 471 together coordinate Mg(2+). Residues aspartate 319–aspartate 323 carry the DDXXD motif motif.

The protein belongs to the terpene synthase family. Tpsa subfamily. Mg(2+) is required as a cofactor. Mn(2+) serves as cofactor. In terms of tissue distribution, mostly expressed in roots, to a lower extent in flowers and, at low levels, in fruits.

The catalysed reaction is (2Z,6Z)-farnesyl diphosphate = (E)-alpha-bisabolene + diphosphate. It catalyses the reaction (2Z,6Z)-farnesyl diphosphate = beta-bisabolene + diphosphate. It carries out the reaction (2E,6E)-farnesyl diphosphate = beta-bisabolene + diphosphate. The enzyme catalyses (2E,6E)-farnesyl diphosphate = (Z)-gamma-bisabolene + diphosphate. The catalysed reaction is (2E,6E)-farnesyl diphosphate = (E)-gamma-bisabolene + diphosphate. It catalyses the reaction (2Z,6Z)-farnesyl diphosphate = (E)-gamma-bisabolene + diphosphate. The protein operates within secondary metabolite biosynthesis; terpenoid biosynthesis. Sesquiterpene synthase involved in the biosynthesis of volatile compounds. Mediates the conversion of (2E,6E)-farnesyl diphosphate ((EE)-FPP) into beta-bisabolene, and of (2Z,6Z)-farnesyl diphosphate ((ZZ)-FPP) into alpha-bisabolene, but also smaller amounts of (Z)-gamma-bisabolene, (E)-gamma-bisabolene and nerolidol. This Solanum lycopersicum (Tomato) protein is Sesquiterpene synthase 14.